The sequence spans 255 residues: Methionine aminopeptidase (255 aa).

His-76 provides a ligand contact to substrate. A divalent metal cation is bound by residues Asp-93, Asp-104, and His-167. Residue His-174 participates in substrate binding. Positions 201 and 232 each coordinate a divalent metal cation.

It belongs to the peptidase M24A family. Methionine aminopeptidase type 1 subfamily. Monomer. The cofactor is Co(2+). Requires Zn(2+) as cofactor. Mn(2+) is required as a cofactor. Fe(2+) serves as cofactor.

The enzyme catalyses Release of N-terminal amino acids, preferentially methionine, from peptides and arylamides.. In terms of biological role, removes the N-terminal methionine from nascent proteins. The N-terminal methionine is often cleaved when the second residue in the primary sequence is small and uncharged (Met-Ala-, Cys, Gly, Pro, Ser, Thr, or Val). Requires deformylation of the N(alpha)-formylated initiator methionine before it can be hydrolyzed. The chain is Methionine aminopeptidase from Treponema pallidum (strain Nichols).